Here is a 216-residue protein sequence, read N- to C-terminus: 3-isopropylmalate dehydratase small subunit (216 aa).

Belongs to the LeuD family. LeuD type 1 subfamily. Heterodimer of LeuC and LeuD.

It carries out the reaction (2R,3S)-3-isopropylmalate = (2S)-2-isopropylmalate. The protein operates within amino-acid biosynthesis; L-leucine biosynthesis; L-leucine from 3-methyl-2-oxobutanoate: step 2/4. In terms of biological role, catalyzes the isomerization between 2-isopropylmalate and 3-isopropylmalate, via the formation of 2-isopropylmaleate. The chain is 3-isopropylmalate dehydratase small subunit from Methylibium petroleiphilum (strain ATCC BAA-1232 / LMG 22953 / PM1).